The sequence spans 339 residues: Ketol-acid reductoisomerase (NADP(+)) (339 aa).

The KARI N-terminal Rossmann domain occupies 1–182 (MRVYYDRDAD…GGGRAGIIET (182 aa)). NADP(+) contacts are provided by residues 24-27 (YGSQ), Arg48, Ser51, Ser53, and 83-86 (DELQ). His108 is a catalytic residue. NADP(+) is bound at residue Gly134. The 146-residue stretch at 183-328 (TFKEECETDL…EKLREMMPWI (146 aa)) folds into the KARI C-terminal knotted domain. The Mg(2+) site is built by Asp191, Glu195, Glu227, and Glu231. Ser252 provides a ligand contact to substrate.

The protein belongs to the ketol-acid reductoisomerase family. Mg(2+) is required as a cofactor.

The enzyme catalyses (2R)-2,3-dihydroxy-3-methylbutanoate + NADP(+) = (2S)-2-acetolactate + NADPH + H(+). It catalyses the reaction (2R,3R)-2,3-dihydroxy-3-methylpentanoate + NADP(+) = (S)-2-ethyl-2-hydroxy-3-oxobutanoate + NADPH + H(+). Its pathway is amino-acid biosynthesis; L-isoleucine biosynthesis; L-isoleucine from 2-oxobutanoate: step 2/4. It functions in the pathway amino-acid biosynthesis; L-valine biosynthesis; L-valine from pyruvate: step 2/4. Functionally, involved in the biosynthesis of branched-chain amino acids (BCAA). Catalyzes an alkyl-migration followed by a ketol-acid reduction of (S)-2-acetolactate (S2AL) to yield (R)-2,3-dihydroxy-isovalerate. In the isomerase reaction, S2AL is rearranged via a Mg-dependent methyl migration to produce 3-hydroxy-3-methyl-2-ketobutyrate (HMKB). In the reductase reaction, this 2-ketoacid undergoes a metal-dependent reduction by NADPH to yield (R)-2,3-dihydroxy-isovalerate. The chain is Ketol-acid reductoisomerase (NADP(+)) from Azorhizobium caulinodans (strain ATCC 43989 / DSM 5975 / JCM 20966 / LMG 6465 / NBRC 14845 / NCIMB 13405 / ORS 571).